Consider the following 155-residue polypeptide: Large ribosomal subunit protein uL22c (155 aa).

This sequence belongs to the universal ribosomal protein uL22 family. In terms of assembly, part of the 50S ribosomal subunit.

Its subcellular location is the plastid. The protein localises to the chloroplast. This protein binds specifically to 23S rRNA. Functionally, the globular domain of the protein is located near the polypeptide exit tunnel on the outside of the subunit, while an extended beta-hairpin is found that lines the wall of the exit tunnel in the center of the 70S ribosome. The polypeptide is Large ribosomal subunit protein uL22c (rpl22) (Solanum tuberosum (Potato)).